The following is a 334-amino-acid chain: MSIRIGYKASAEQFGPRDLVEYAVRAEELGLDSVTVSDHFLPWRHEGGHAPFALAWMAAVGERTNRVLIGTSVLTPTFRYNPAVIAQAFATMGLLYPGRIMLGVGTGEALNEIAVSGREWPEFKERFARLREAVDLIRDLWTKEGVSSDGPFYPTVDASIYDRPETPVKVYVAAGGPLVAKYAGRAGDGFIATSGKGMELYTEKLLPAVKEGAEKAGKTFEDVDRMLEVKVSYDRDPEAALENTRFWAPLSLTPEQKHSVDSATEMERLADELPIEQVAKRWIVASDPEQAVKQFRPYLEAGFNHFVVHGPGHDQERFLTQFTEDVVPLLRKLG.

Asp38 is a binding site for coenzyme F420-(gamma-Glu)n. His39 (proton donor) is an active-site residue. Residues Thr75 and 106 to 107 (TG) contribute to the coenzyme F420-(gamma-Glu)n site. Glu108 functions as the Proton acceptor in the catalytic mechanism. Coenzyme F420-(gamma-Glu)n is bound by residues Asn111, 175 to 176 (GG), and 178 to 179 (LV). Substrate contacts are provided by Thr193, Lys196, Lys257, and Arg281.

It belongs to the F420-dependent glucose-6-phosphate dehydrogenase family. Homodimer.

It carries out the reaction oxidized coenzyme F420-(gamma-L-Glu)(n) + D-glucose 6-phosphate + H(+) = 6-phospho-D-glucono-1,5-lactone + reduced coenzyme F420-(gamma-L-Glu)(n). Functionally, catalyzes the coenzyme F420-dependent oxidation of glucose 6-phosphate (G6P) to 6-phosphogluconolactone. In Kribbella flavida (strain DSM 17836 / JCM 10339 / NBRC 14399), this protein is F420-dependent glucose-6-phosphate dehydrogenase.